Here is a 790-residue protein sequence, read N- to C-terminus: Protein SEY1 (790 aa).

Topologically, residues 1 to 692 (MELSEGELSH…KRSIVQHITQ (692 aa)) are cytoplasmic. The 230-residue stretch at 55–284 (GNNYHIISVF…VSNELFKPEY (230 aa)) folds into the GB1/RHD3-type G domain. 65-72 (GSQSTGKS) lines the GTP pocket. Residues 693-713 (IPYYIYLIILVLGWNEFMAII) traverse the membrane as a helical segment. At 714 to 716 (RNP) the chain is on the lumenal side. A helical membrane pass occupies residues 717 to 737 (LFFSLSIVLGATVYVLYYLGL). The Cytoplasmic portion of the chain corresponds to 738–790 (LRPALVVAQRTMDEVIVMAKTKLREVLIDDHEVTGRQLNKMAGSKENIELDDM).

It belongs to the TRAFAC class dynamin-like GTPase superfamily. GB1/RHD3 GTPase family. RHD3 subfamily.

The protein resides in the endoplasmic reticulum membrane. Cooperates with the reticulon proteins and tubule-shaping DP1 family proteins to generate and maintain the structure of the tubular endoplasmic reticulum network. Has GTPase activity, which is required for its function in ER organization. This Candida albicans (strain WO-1) (Yeast) protein is Protein SEY1.